The chain runs to 898 residues: Serine/threonine-protein kinase TAO3 (898 aa).

The 254-residue stretch at 24–277 (FIDLHEIGHG…AVELLRHDFI (254 aa)) folds into the Protein kinase domain. Residues 30-38 (IGHGSFGAV) and Lys-53 each bind ATP. The active-site Proton acceptor is Asp-147. 2 disordered regions span residues 316–375 (TRNG…DESS) and 405–424 (DEAGHGDPRPEPRPTQSVQS). Residue Ser-324 is modified to Phosphoserine; by ATM. A phosphoserine mark is found at Ser-343, Ser-346, and Ser-349. Residues 349–366 (SIPSTSVSTGSRSSSVNS) are compositionally biased toward low complexity. Thr-357 bears the Phosphothreonine mark. At Ser-359 the chain carries Phosphoserine. A compositionally biased stretch (basic and acidic residues) spans 405 to 416 (DEAGHGDPRPEP). Ser-442 carries the phosphoserine modification. 3 coiled-coil regions span residues 452 to 502 (EQEN…THAN), 548 to 649 (FLES…HAML), and 754 to 871 (LKTL…QERE). The disordered stretch occupies residues 565–596 (EEMNEDHSTPKKEKQERISKHKENLQHTQAEE). Lys-830 is subject to N6-acetyllysine.

Belongs to the protein kinase superfamily. STE Ser/Thr protein kinase family. STE20 subfamily. As to quaternary structure, self-associates. Interacts with ERN1 and TRAF2. Interaction with TRAF2 is facilitated under ER stress conditions, such as treatment with tunicamycin, and may promote TRAF2 phosphorylation. Interacts (via N-terminus) with STK25; the interaction promotes STK25 abundance at the level of protein expression and/or stability. In terms of processing, autophosphorylated. Phosphorylation at Ser-324 by ATM following DNA damage is required for activation of the p38/MAPK14 stress-activated MAPK cascade. Phosphorylated at Ser-324 and on Tyr residues during T cell activation. Phosphorylated by LRRK2.

The protein localises to the cytoplasm. Its subcellular location is the cell membrane. The protein resides in the membrane raft. It localises to the lipid droplet. It carries out the reaction L-seryl-[protein] + ATP = O-phospho-L-seryl-[protein] + ADP + H(+). The catalysed reaction is L-threonyl-[protein] + ATP = O-phospho-L-threonyl-[protein] + ADP + H(+). Serine/threonine-protein kinase that acts as a regulator of the p38/MAPK14 stress-activated MAPK cascade and of the MAPK8/JNK cascade. In response to DNA damage, involved in the G2/M transition DNA damage checkpoint by activating the p38/MAPK14 stress-activated MAPK cascade, probably by mediating phosphorylation of upstream MAP2K3 and MAP2K6 kinases. Inhibits basal activity of the MAPK8/JNK cascade and diminishes its activation in response to epidermal growth factor (EGF). Positively regulates canonical T cell receptor (TCR) signaling by preventing early PTPN6/SHP1-mediated inactivation of LCK, ensuring sustained TCR signaling that is required for optimal activation and differentiation of T cells. Phosphorylates PTPN6/SHP1 on 'Thr-394', leading to its polyubiquitination and subsequent proteasomal degradation. Required for cell surface expression of metalloprotease ADAM10 on type 1 transitional B cells which is necessary for their NOTCH-mediated development into marginal zone B cells. Also required for the NOTCH-mediated terminal differentiation of splenic conventional type 2 dendritic cells. Positively regulates osteoblast differentiation by acting as an upstream activator of the JNK pathway. Promotes JNK signaling in hepatocytes and positively regulates hepatocyte lipid storage by inhibiting beta-oxidation and triacylglycerol secretion while enhancing lipid synthesis. Restricts age-associated inflammation by negatively regulating differentiation of macrophages and their production of pro-inflammatory cytokines. Plays a role in negatively regulating the abundance of regulatory T cells in white adipose tissue. This is Serine/threonine-protein kinase TAO3 (Taok3) from Mus musculus (Mouse).